Consider the following 2119-residue polypeptide: Outer kinetochore KNL1 complex subunit KNL1 (2119 aa).

Residues Met1 to Val59 are disordered. A may mediate oligomerization region spans residues Met1–Thr202. Interaction with microtubules regions lie at residues Arg17–Leu34 and Arg53–Ser80. The segment at His23 to Ser80 is interaction with PP1CA; contains the protein phosphatase 1 (PP1) interaction motifs SILK, RVXF and phi-phi. Residues Ser24, Ser32, and Ser60 each carry the phosphoserine modification. Positions Glu124–Gly140 are interaction with BUB1. The interaction with BUB1B stretch occupies residues Glu160–Thr179. Ser538 carries the phosphoserine modification. Residues Thr540 and Thr739 each carry the phosphothreonine modification. Residues Asp723–Asp827 form repeat 1. The interval Asp723–Asp1027 is 2 X 104 AA approximate repeats. Phosphoserine occurs at positions 794 and 878. Copy 2 of the repeat occupies Lys923 to Asp1027. 2 positions are modified to phosphoserine: Ser1243 and Ser1464. Residues Ser1557–Asp1583 are disordered. Positions Asn1566–Asp1583 are enriched in basic and acidic residues. The short motif at Thr1577 to Ile1590 is the Nuclear localization signal element. Ser1616, Ser1627, and Ser1642 each carry phosphoserine. A required for interaction with ZWINT region spans residues Lys1763–Gln1890. Positions Val1799 to Gln1890 form a coiled coil. Residues Glu1873–Ala2093 are interaction with NSL1, DSN1 and required for assembly into the outer kinetochore.

In terms of assembly, component of the KNL1 complex composed of KNL1 and ZWINT. Part of the ten-subunit outer kinetochore KMN network that includes the KNL1, MIS12 and NDC80 complexes; a bioriented kinetochore contains approximately 150 copies of the network. Interacts (via C-terminus) with the MIS12 complex subunits NSL1 (via C-terminus), PMF1 and DSN1; the interaction is direct. Interacts (via N-terminal region) with BUB1B (via BUB1 N-terminal domain); the interaction is direct and is required for cell cycle arrest upon activation of the mitotic spindle assembly checkpoint. Interacts (via N-terminal region) with BUB1 (via BUB1 N-terminal domain); the interaction is direct. Interacts with the protein phosphatase PP1 subunit PPP1CA; the interaction is direct and mutually exclusive with binding to microtubules. Interacts with the protein phosphatase PP1 subunit PPP1CC; the interaction is direct and mutually exclusive with binding to microtubules. In terms of processing, phosphorylation by AURKB negatively regulates its interaction with protein phosphatase 1 (PP1) subunit PPP1CA and with microtubules. In terms of tissue distribution, expressed in oocytes during meiotic progression (at protein level). Expressed during spermatogenesis.

The protein resides in the nucleus. It localises to the chromosome. It is found in the centromere. The protein localises to the kinetochore. Its subcellular location is the cytoplasm. In terms of biological role, acts as a component of the outer kinetochore KNL1 complex that serves as a docking point for spindle assembly checkpoint components and mediates microtubule-kinetochore interactions. Kinetochores, consisting of a centromere-associated inner segment and a microtubule-contacting outer segment, play a crucial role in chromosome segregation by mediating the physical connection between centromeric DNA and spindle microtubules. The outer kinetochore is made up of the ten-subunit KMN network, comprising the MIS12, NDC80 and KNL1 complexes, and auxiliary microtubule-associated components; together they connect the outer kinetochore with the inner kinetochore, bind microtubules, and mediate interactions with mitotic checkpoint proteins that delay anaphase until chromosomes are bioriented on the spindle. Required for kinetochore binding by a distinct subset of kMAPs (kinetochore-bound microtubule-associated proteins) and motors. Acts in coordination with CENPK to recruit the NDC80 complex to the outer kinetochore. Can bind either to microtubules or to the protein phosphatase 1 (PP1) catalytic subunits PPP1CA and PPP1CC (via overlapping binding sites), it has higher affinity for PP1. Recruits MAD2L1 to the kinetochore and also directly links BUB1 and BUB1B to the kinetochore. In addition to orienting mitotic chromosomes, it is also essential for alignment of homologous chromosomes during meiotic metaphase I. In meiosis I, required to activate the spindle assembly checkpoint at unattached kinetochores to correct erroneous kinetochore-microtubule attachments. The chain is Outer kinetochore KNL1 complex subunit KNL1 from Mus musculus (Mouse).